We begin with the raw amino-acid sequence, 592 residues long: Anaphase-promoting complex subunit 8 (592 aa).

TPR repeat units lie at residues 66–99, 160–193, 291–324, 359–392, 393–426, 428–460, 461–494, and 496–528; these read EYYK…QLPI, QQQQ…NKKD, TYIL…EPNR, PETC…NDRY, LSAW…NPRD, RAWY…RPYD, PRMW…YDRE, and VAIN…CDQE. A disordered region spans residues 129-166; the sequence is QQQAQQQAQQAQQESQQNDKNNDTNNNNKTDQQQQQQQ.

Belongs to the APC8/CDC23 family. The APC/C is composed of at least 13 subunits that stay tightly associated throughout the cell cycle: anapc1, anapc2, anapc3, anapc4, anapc5, anapc6, anapc7, anapc8, anapc10, anapc11, cdc20, cdc26 and cdh1.

It is found in the nucleus. Its pathway is protein modification; protein ubiquitination. In terms of biological role, component of the anaphase promoting complex/cyclosome (APC/C), a cell cycle-regulated E3 ubiquitin-protein ligase complex that controls progression through mitosis and the G1 phase of the cell cycle. The protein is Anaphase-promoting complex subunit 8 (anapc8) of Dictyostelium discoideum (Social amoeba).